The primary structure comprises 184 residues: Inner membrane-spanning protein YciB (184 aa).

Helical transmembrane passes span Leu-19–Ile-39, Leu-52–Glu-72, Trp-76–Phe-96, Leu-123–Leu-143, and Phe-151–Ile-171.

It belongs to the YciB family.

The protein localises to the cell inner membrane. Functionally, plays a role in cell envelope biogenesis, maintenance of cell envelope integrity and membrane homeostasis. In Pasteurella multocida (strain Pm70), this protein is Inner membrane-spanning protein YciB.